We begin with the raw amino-acid sequence, 258 residues long: Type III pantothenate kinase (258 aa).

ATP is bound at residue 6–13 (DVGNTNTV). Substrate is bound by residues Tyr-100 and 107–110 (GADR). The active-site Proton acceptor is Asp-109. Asp-129 lines the K(+) pocket. Thr-132 is a binding site for ATP. Thr-184 contacts substrate.

This sequence belongs to the type III pantothenate kinase family. As to quaternary structure, homodimer. NH4(+) serves as cofactor. It depends on K(+) as a cofactor.

Its subcellular location is the cytoplasm. It catalyses the reaction (R)-pantothenate + ATP = (R)-4'-phosphopantothenate + ADP + H(+). It participates in cofactor biosynthesis; coenzyme A biosynthesis; CoA from (R)-pantothenate: step 1/5. Its function is as follows. Catalyzes the phosphorylation of pantothenate (Pan), the first step in CoA biosynthesis. The chain is Type III pantothenate kinase from Bacillus licheniformis (strain ATCC 14580 / DSM 13 / JCM 2505 / CCUG 7422 / NBRC 12200 / NCIMB 9375 / NCTC 10341 / NRRL NRS-1264 / Gibson 46).